Reading from the N-terminus, the 294-residue chain is 4-hydroxy-tetrahydrodipicolinate synthase (294 aa).

Residue Thr-49 participates in pyruvate binding. Catalysis depends on Tyr-136, which acts as the Proton donor/acceptor. The active-site Schiff-base intermediate with substrate is the Lys-164. Ile-207 is a binding site for pyruvate.

It belongs to the DapA family. As to quaternary structure, homotetramer; dimer of dimers.

Its subcellular location is the cytoplasm. The catalysed reaction is L-aspartate 4-semialdehyde + pyruvate = (2S,4S)-4-hydroxy-2,3,4,5-tetrahydrodipicolinate + H2O + H(+). The protein operates within amino-acid biosynthesis; L-lysine biosynthesis via DAP pathway; (S)-tetrahydrodipicolinate from L-aspartate: step 3/4. In terms of biological role, catalyzes the condensation of (S)-aspartate-beta-semialdehyde [(S)-ASA] and pyruvate to 4-hydroxy-tetrahydrodipicolinate (HTPA). The protein is 4-hydroxy-tetrahydrodipicolinate synthase of Natronomonas pharaonis (strain ATCC 35678 / DSM 2160 / CIP 103997 / JCM 8858 / NBRC 14720 / NCIMB 2260 / Gabara) (Halobacterium pharaonis).